Consider the following 124-residue polypeptide: Large ribosomal subunit protein bL12 (124 aa).

This sequence belongs to the bacterial ribosomal protein bL12 family. Homodimer. Part of the ribosomal stalk of the 50S ribosomal subunit. Forms a multimeric L10(L12)X complex, where L10 forms an elongated spine to which 2 to 4 L12 dimers bind in a sequential fashion. Binds GTP-bound translation factors.

In terms of biological role, forms part of the ribosomal stalk which helps the ribosome interact with GTP-bound translation factors. Is thus essential for accurate translation. This Burkholderia thailandensis (strain ATCC 700388 / DSM 13276 / CCUG 48851 / CIP 106301 / E264) protein is Large ribosomal subunit protein bL12.